Consider the following 230-residue polypeptide: UPF0173 metal-dependent hydrolase Acid_3917 (230 aa).

Belongs to the UPF0173 family.

This is UPF0173 metal-dependent hydrolase Acid_3917 from Solibacter usitatus (strain Ellin6076).